The sequence spans 122 residues: Large ribosomal subunit protein uL14 (122 aa).

It belongs to the universal ribosomal protein uL14 family. As to quaternary structure, part of the 50S ribosomal subunit. Forms a cluster with proteins L3 and L19. In the 70S ribosome, L14 and L19 interact and together make contacts with the 16S rRNA in bridges B5 and B8.

Binds to 23S rRNA. Forms part of two intersubunit bridges in the 70S ribosome. The protein is Large ribosomal subunit protein uL14 of Leifsonia xyli subsp. xyli (strain CTCB07).